A 214-amino-acid polypeptide reads, in one-letter code: Glycine-rich protein 2 (214 aa).

The 68-residue stretch at 8–75 (RAKGTVKWFS…RTKAVDVTGP (68 aa)) folds into the CSD domain. The tract at residues 54–91 (TVEFEVESGGDGRTKAVDVTGPDGAAVQGGRGGGGGGG) is disordered. A compositionally biased stretch (gly residues) spans 80–91 (VQGGRGGGGGGG). CCHC-type zinc fingers lie at residues 157–174 (SGCF…DCSQ) and 194–211 (GGCY…ECTS).

This Nicotiana sylvestris (Wood tobacco) protein is Glycine-rich protein 2 (GRP-2).